We begin with the raw amino-acid sequence, 160 residues long: 2-C-methyl-D-erythritol 2,4-cyclodiphosphate synthase (160 aa).

A divalent metal cation is bound by residues D10 and H12. 4-CDP-2-C-methyl-D-erythritol 2-phosphate is bound by residues 10 to 12 (DVH) and 36 to 37 (HS). H44 lines the a divalent metal cation pocket. 4-CDP-2-C-methyl-D-erythritol 2-phosphate is bound by residues 58 to 60 (DIG), 63 to 67 (FPDTD), 102 to 108 (AQAPKMA), 134 to 137 (TTTE), F141, and R144.

Belongs to the IspF family. In terms of assembly, homotrimer. It depends on a divalent metal cation as a cofactor.

The catalysed reaction is 4-CDP-2-C-methyl-D-erythritol 2-phosphate = 2-C-methyl-D-erythritol 2,4-cyclic diphosphate + CMP. Its pathway is isoprenoid biosynthesis; isopentenyl diphosphate biosynthesis via DXP pathway; isopentenyl diphosphate from 1-deoxy-D-xylulose 5-phosphate: step 4/6. Functionally, involved in the biosynthesis of isopentenyl diphosphate (IPP) and dimethylallyl diphosphate (DMAPP), two major building blocks of isoprenoid compounds. Catalyzes the conversion of 4-diphosphocytidyl-2-C-methyl-D-erythritol 2-phosphate (CDP-ME2P) to 2-C-methyl-D-erythritol 2,4-cyclodiphosphate (ME-CPP) with a corresponding release of cytidine 5-monophosphate (CMP). The chain is 2-C-methyl-D-erythritol 2,4-cyclodiphosphate synthase from Shewanella denitrificans (strain OS217 / ATCC BAA-1090 / DSM 15013).